A 485-amino-acid polypeptide reads, in one-letter code: Retron Mx162 reverse transcriptase (485 aa).

The tract at residues 1–33 (MTARLDPFVPAASPQAVPTPELTAPSSDAAAKR) is disordered. Residues 167–407 (RWFAFHREVD…TRQRVTGLVV (241 aa)) enclose the Reverse transcriptase domain. Mg(2+) is bound by residues aspartate 250, aspartate 346, and aspartate 347.

The protein belongs to the bacterial reverse transcriptase family.

The enzyme catalyses DNA(n) + a 2'-deoxyribonucleoside 5'-triphosphate = DNA(n+1) + diphosphate. Its activity is regulated as follows. msDNA synthesis is inhibited by rifampicin and chloramphenicol. Reverse transcriptase (RT) responsible for synthesis of msDNA-Mx162 (a branched molecule with RNA linked by a 2',5'-phosphodiester bond to ssDNA). The retron transcript serves as primer (from a conserved internal G residue) and template for the reaction, and codes for the RT. The retron is involved in antiviral defense. In Myxococcus xanthus, this protein is Retron Mx162 reverse transcriptase.